A 339-amino-acid polypeptide reads, in one-letter code: U11/U12 small nuclear ribonucleoprotein 48 kDa protein (339 aa).

Residues 55-82 (VVICPYDSNHHMPKSSLAKHMASCRLRK) form a CHHC U11-48K-type zinc finger. Positions 58, 64, 74, and 78 each coordinate Zn(2+). Residues Lys-87 and Lys-104 each participate in a glycyl lysine isopeptide (Lys-Gly) (interchain with G-Cter in SUMO2) cross-link. Positions 255-339 (HWQEEQEKAE…HSHKRRKQKI (85 aa)) are disordered. Positions 294-309 (RHRRDRSRSPHKRKRN) are enriched in basic residues. Basic and acidic residues predominate over residues 310 to 328 (KDKDKNCESRRRKERDGER). Over residues 329–339 (HHSHKRRKQKI) the composition is skewed to basic residues.

Component of the U11/U12 snRNPs that are part of the U12-type spliceosome. Not found in the major spliceosome.

It localises to the nucleus. Its function is as follows. Likely involved in U12-type 5' splice site recognition. This is U11/U12 small nuclear ribonucleoprotein 48 kDa protein (SNRNP48) from Homo sapiens (Human).